We begin with the raw amino-acid sequence, 1228 residues long: S-layer protein (1228 aa).

Positions 1 to 30 (MDRKKAVKLATASAIAASAFVAANPNASEA) are cleaved as a signal peptide.

The protein resides in the secreted. The protein localises to the cell wall. It localises to the S-layer. The S-layer is a paracrystalline mono-layered assembly of proteins which coat the surface of bacteria. In Geobacillus stearothermophilus (Bacillus stearothermophilus), this protein is S-layer protein (sbsA).